Here is a 199-residue protein sequence, read N- to C-terminus: Transgelin-2 (199 aa).

At Ala2 the chain carries N-acetylalanine. Ser11 carries the post-translational modification Phosphoserine. An N6-acetyllysine mark is found at Lys17 and Lys20. Residues Ala24–Ala136 enclose the Calponin-homology (CH) domain. Ser163 is subject to Phosphoserine. Lys171 participates in a covalent cross-link: Glycyl lysine isopeptide (Lys-Gly) (interchain with G-Cter in SUMO2). The Calponin-like repeat unit spans residues Ile174 to Leu199. Thr180 carries the post-translational modification Phosphothreonine. Omega-N-methylarginine occurs at positions 182 and 196.

This sequence belongs to the calponin family.

The polypeptide is Transgelin-2 (Tagln2) (Mus musculus (Mouse)).